Here is a 461-residue protein sequence, read N- to C-terminus: D-phenylhydantoinase (461 aa).

A divalent metal cation-binding residues include H59, H61, and K151. Residue K151 is modified to N6-carboxylysine. Y156 is a substrate binding site. 2 residues coordinate a divalent metal cation: H182 and H239. S286 is a substrate binding site. D313 is an a divalent metal cation binding site. Position 335 (N335) interacts with substrate.

It belongs to the metallo-dependent hydrolases superfamily. Hydantoinase/dihydropyrimidinase family. Homotetramer. A divalent metal cation is required as a cofactor. Carboxylation allows a single lysine to coordinate two divalent metal cations.

It catalyses the reaction D-5-phenylhydantoin + H2O = N-carbamoyl-D-phenylglycine + H(+). Its function is as follows. Catalyzes the stereospecific hydrolysis of the cyclic amide bond of D-hydantoin derivatives with an aromatic side chains at the 5'-position. Has no activity on dihydropyrimidines. The physiological function is unknown. The sequence is that of D-phenylhydantoinase from Escherichia coli O6:K15:H31 (strain 536 / UPEC).